We begin with the raw amino-acid sequence, 432 residues long: Teosinte glume architecture 1 (432 aa).

2 disordered regions span residues 20 to 55 (HAAAAPSSGGHAANAAAAGTGTESRPPAPGAAGAPA) and 68 to 102 (ECEPGAARREREAAAGAAKRPRPAGPGGQQQQQQC). Over residues 22-41 (AAAPSSGGHAANAAAAGTGT) the composition is skewed to low complexity. Residues 102–179 (CPSCAVDGCR…DGHNRRRRKP (78 aa)) form an SBP-type zinc finger. Zn(2+) contacts are provided by Cys105, Cys110, Cys127, His130, Cys146, Cys149, His153, and Cys165. Over residues 409–420 (GGGSGGGEGSSD) the composition is skewed to gly residues. The segment at 409 to 432 (GGGSGGGEGSSDGGTSSSMPFSWQ) is disordered.

As to quaternary structure, monomer and homodimer. Strongly expressed in immature ears and weakly in husks. Found in the inflorescence meristem of the developing ear, in the spikelet pair primordia, the glume primordia, the cupule forming region and other floral organs. Not detected in other tissues.

Its function is as follows. SBP transcriptional regulator probably involved in the domestication of maize. Acts as a transcriptional repressor binding to a 5'-GTAC-3' motif. May repress the growth of lateral branches in length and numbers. This is Teosinte glume architecture 1 from Zea mays (Maize).